Here is a 197-residue protein sequence, read N- to C-terminus: RNA pyrophosphohydrolase (197 aa).

Positions 6 to 149 (GYRPNVGIVI…KRDVYRRAMK (144 aa)) constitute a Nudix hydrolase domain. The short motif at 38–59 (GGINEGETPEQAMFRELFEEVG) is the Nudix box element. Residues 170–197 (ETKKAETGKKQPYYHKYAPQNKKGRKRR) form a disordered region.

It belongs to the Nudix hydrolase family. RppH subfamily. It depends on a divalent metal cation as a cofactor.

Accelerates the degradation of transcripts by removing pyrophosphate from the 5'-end of triphosphorylated RNA, leading to a more labile monophosphorylated state that can stimulate subsequent ribonuclease cleavage. The protein is RNA pyrophosphohydrolase of Actinobacillus succinogenes (strain ATCC 55618 / DSM 22257 / CCUG 43843 / 130Z).